An 856-amino-acid polypeptide reads, in one-letter code: DNA mismatch repair protein MutS (856 aa).

ATP is bound at residue 607 to 614 (GPNMAGKS).

Belongs to the DNA mismatch repair MutS family.

This protein is involved in the repair of mismatches in DNA. It is possible that it carries out the mismatch recognition step. This protein has a weak ATPase activity. In Cytophaga hutchinsonii (strain ATCC 33406 / DSM 1761 / CIP 103989 / NBRC 15051 / NCIMB 9469 / D465), this protein is DNA mismatch repair protein MutS.